We begin with the raw amino-acid sequence, 234 residues long: Orotate phosphoribosyltransferase (234 aa).

Residue K37 coordinates 5-phospho-alpha-D-ribose 1-diphosphate. Residue 45–46 coordinates orotate; it reads FF. 5-phospho-alpha-D-ribose 1-diphosphate contacts are provided by residues 83 to 84, R109, K110, K113, H115, and 134 to 142; these read YK and DDVISAGTS. Orotate is bound by residues S138 and R166.

Belongs to the purine/pyrimidine phosphoribosyltransferase family. PyrE subfamily. As to quaternary structure, homodimer. The cofactor is Mg(2+).

It carries out the reaction orotidine 5'-phosphate + diphosphate = orotate + 5-phospho-alpha-D-ribose 1-diphosphate. Its pathway is pyrimidine metabolism; UMP biosynthesis via de novo pathway; UMP from orotate: step 1/2. Functionally, catalyzes the transfer of a ribosyl phosphate group from 5-phosphoribose 1-diphosphate to orotate, leading to the formation of orotidine monophosphate (OMP). This is Orotate phosphoribosyltransferase from Methylibium petroleiphilum (strain ATCC BAA-1232 / LMG 22953 / PM1).